The primary structure comprises 230 residues: MIFHKNIVKAEFIRRPNRFQAYVKLNGSEVMVHVPNTGRCREILLPETTILLREENGINRKTKYDLIAGYKENKLINIDSQIPNKVVEEALENRKISYFTKYNKIEREKTFGNSRFDFKLSGDENLKCYVEVKGVTLEKEGVAMFPDAPTERGRKHLLELIEVKKSGMDAAVLFLIQMKDVKYFRPHDEMDKKFGEALRHAKENYVQVVAYDCDVGENFIILRDEIKVQL.

The protein belongs to the SfsA family.

This is Sugar fermentation stimulation protein homolog from Clostridium kluyveri (strain NBRC 12016).